The following is a 227-amino-acid chain: Ribonuclease 3 (227 aa).

Residues 5 to 127 (YQKLSRRIGY…IIGAMYLDAG (123 aa)) form the RNase III domain. E40 lines the Mg(2+) pocket. Residue D44 is part of the active site. Residues D113 and E116 each contribute to the Mg(2+) site. E116 is a catalytic residue. The DRBM domain maps to 154-224 (DAKTRLQEFL…AAKALKKLEK (71 aa)).

This sequence belongs to the ribonuclease III family. In terms of assembly, homodimer. It depends on Mg(2+) as a cofactor.

The protein localises to the cytoplasm. The enzyme catalyses Endonucleolytic cleavage to 5'-phosphomonoester.. Its function is as follows. Digests double-stranded RNA. Involved in the processing of primary rRNA transcript to yield the immediate precursors to the large and small rRNAs (23S and 16S). Processes some mRNAs, and tRNAs when they are encoded in the rRNA operon. Processes pre-crRNA and tracrRNA of type II CRISPR loci if present in the organism. The chain is Ribonuclease 3 from Marinomonas sp. (strain MWYL1).